The chain runs to 196 residues: Imidazoleglycerol-phosphate dehydratase (196 aa).

This sequence belongs to the imidazoleglycerol-phosphate dehydratase family.

It is found in the cytoplasm. It carries out the reaction D-erythro-1-(imidazol-4-yl)glycerol 3-phosphate = 3-(imidazol-4-yl)-2-oxopropyl phosphate + H2O. The protein operates within amino-acid biosynthesis; L-histidine biosynthesis; L-histidine from 5-phospho-alpha-D-ribose 1-diphosphate: step 6/9. The polypeptide is Imidazoleglycerol-phosphate dehydratase (Zymomonas mobilis subsp. mobilis (strain ATCC 31821 / ZM4 / CP4)).